The chain runs to 107 residues: C-X-C motif chemokine 3 (107 aa).

Positions 1 to 34 (MAHATLSAAPSNPRLLRVALLLLLLVAASRRAAG) are cleaved as a signal peptide. Intrachain disulfides connect Cys43-Cys69 and Cys45-Cys85.

The protein belongs to the intercrine alpha (chemokine CxC) family. N-terminal processed form GRO-gamma(5-73) is produced by proteolytic cleavage after secretion from peripheral blood monocytes.

The protein localises to the secreted. Ligand for CXCR2. Has chemotactic activity for neutrophils. May play a role in inflammation and exert its effects on endothelial cells in an autocrine fashion. In vitro, the processed form GRO-gamma(5-73) shows a fivefold higher chemotactic activity for neutrophilic granulocytes. The polypeptide is C-X-C motif chemokine 3 (CXCL3) (Homo sapiens (Human)).